We begin with the raw amino-acid sequence, 427 residues long: Citrate synthase (427 aa).

Catalysis depends on residues histidine 306 and aspartate 363.

Belongs to the citrate synthase family. In terms of assembly, homohexamer.

The enzyme catalyses oxaloacetate + acetyl-CoA + H2O = citrate + CoA + H(+). It participates in carbohydrate metabolism; tricarboxylic acid cycle; isocitrate from oxaloacetate: step 1/2. With respect to regulation, allosterically inhibited by NADH. This is Citrate synthase (gltA) from Salmonella typhimurium (strain LT2 / SGSC1412 / ATCC 700720).